A 357-amino-acid chain; its full sequence is MASSINGRKPSEIFQGQALLYRHIYAFIDSMCLKWIVELDIPNIIHNHGKPITVSELVSILKVPQTKAGNVQRIMRYMAHNGFFERVRIQEEQEENEAYALTAASELLVKGSELCLAPMVECVLDPTLSGSYHQLKKWIYEEDLTLFGVSLGSHFWEFLNENPEYNKSFNDAMASDSQMINLALRDCNSGFEGVESIVDVGGGIGTTAKIICDTFPNLKCIVFDRPKVVENLSGTNNLSYVGGDMFQSVPKADAVLLKWILHNWTDNDCRRILEKCKEAVSSDGEKGKVIIIEMVINENQDEHEITGTKLLMDVNMACLNGKERSEEEWKKLFIEAGFRDYKISPLTGFLSLIEVYP.

S-adenosyl-L-methionine contacts are provided by residues 200-203, Asp-224, 224-225, 244-245, and Lys-258; these read VGGG, DR, and DM. The active-site Proton acceptor is the His-262.

Belongs to the class I-like SAM-binding methyltransferase superfamily. Cation-independent O-methyltransferase family. COMT subfamily.

It carries out the reaction a 7-hydroxyisoflavone + S-adenosyl-L-methionine = a 7-methoxyisoflavone + S-adenosyl-L-homocysteine + H(+). In terms of biological role, 7-O-methyltransferase involved in the biosynthesis of isoformononetin. Can use daidzein as substrate, but not medicarpin or 2,7,4'-trihydroxyisoflavanone. This chain is Isoflavone 7-O-methyltransferase (D7OMT), found in Glycyrrhiza echinata (Licorice).